Here is a 270-residue protein sequence, read N- to C-terminus: uncharacterized protein (270 aa).

The J domain occupies 43-112 (CTANDIKRKY…REEYDRFGIH (70 aa)). A disordered region spans residues 239-270 (EQSKQIPTQQKPSSLPPPERALPAPTMPTPSS). The segment covering 242–251 (KQIPTQQKPS) has biased composition (polar residues). The segment covering 252-270 (SLPPPERALPAPTMPTPSS) has biased composition (pro residues).

This is an uncharacterized protein from Schizosaccharomyces pombe (strain 972 / ATCC 24843) (Fission yeast).